Consider the following 195-residue polypeptide: Large ribosomal subunit protein mL58 (195 aa).

The N-terminal 18 residues, 1–18 (MIGRGVCCRSFHTAGSAW), are a transit peptide targeting the mitochondrion.

This sequence belongs to the mitochondrion-specific ribosomal protein mL58 family. In terms of assembly, component of the mitochondrial large ribosomal subunit (mt-LSU). Mature yeast 74S mitochondrial ribosomes consist of a small (37S) and a large (54S) subunit. The 37S small subunit contains a 15S ribosomal RNA (15S mt-rRNA) and 34 different proteins. The 54S large subunit contains a 21S rRNA (21S mt-rRNA) and 46 different proteins.

It localises to the mitochondrion. Its function is as follows. Component of the mitochondrial ribosome (mitoribosome), a dedicated translation machinery responsible for the synthesis of mitochondrial genome-encoded proteins, including at least some of the essential transmembrane subunits of the mitochondrial respiratory chain. The mitoribosomes are attached to the mitochondrial inner membrane and translation products are cotranslationally integrated into the membrane. This Saccharomyces cerevisiae (strain ATCC 204508 / S288c) (Baker's yeast) protein is Large ribosomal subunit protein mL58 (MRPL20).